Consider the following 605-residue polypeptide: Elongation factor 4 (605 aa).

The tr-type G domain occupies 11–193 (EKIRNFSIIA…QIVEKVPAPT (183 aa)). Residues 23-28 (DHGKST) and 140-143 (NKID) contribute to the GTP site.

This sequence belongs to the TRAFAC class translation factor GTPase superfamily. Classic translation factor GTPase family. LepA subfamily.

Its subcellular location is the cell membrane. The catalysed reaction is GTP + H2O = GDP + phosphate + H(+). Required for accurate and efficient protein synthesis under certain stress conditions. May act as a fidelity factor of the translation reaction, by catalyzing a one-codon backward translocation of tRNAs on improperly translocated ribosomes. Back-translocation proceeds from a post-translocation (POST) complex to a pre-translocation (PRE) complex, thus giving elongation factor G a second chance to translocate the tRNAs correctly. Binds to ribosomes in a GTP-dependent manner. This chain is Elongation factor 4, found in Streptococcus pyogenes serotype M4 (strain MGAS10750).